An 85-amino-acid polypeptide reads, in one-letter code: MGKTISFSAIILVFLLVSTGLMKQGDAQAQKCEWECKLLPNFPCWLKGAGEGLCDNLCKYEGAISGVCVSDPHRCLCRNRKPGCS.

Residues 1–29 (MGKTISFSAIILVFLLVSTGLMKQGDAQA) form the signal peptide. 4 disulfides stabilise this stretch: C32-C84, C44-C68, C54-C75, and C58-C77.

The protein belongs to the DEFL family.

It localises to the secreted. The protein is Defensin-like protein 11 of Arabidopsis thaliana (Mouse-ear cress).